The primary structure comprises 421 residues: Polygalacturonase (421 aa).

Positions 1–20 (MKFSTAIIVSFLFIADFCAA) are cleaved as a signal peptide. 2 N-linked (GlcNAc...) asparagine glycosylation sites follow: Asn156 and Asn180. 2 PbH1 repeats span residues 178-204 (CKNITFDGFTITAPGDSPNTDGIHMGK) and 205-226 (STDVKILNTNIGTGDDCVSIGD). The Proton donor role is filled by Asp219. His242 is a catalytic residue. 2 PbH1 repeats span residues 258 to 279 (VEGITVKNCTLTATDNGVRIKT) and 289 to 310 (VSDIHFEDITMTNVKNPVIIDQ). N-linked (GlcNAc...) asparagine glycosylation is present at Asn265. Residues 394–421 (PGAPAASTTATPAASKTATPAAGKSPAK) form a disordered region.

This sequence belongs to the glycosyl hydrolase 28 family. As to expression, pollen specific.

It localises to the secreted. It is found in the cell wall. The enzyme catalyses (1,4-alpha-D-galacturonosyl)n+m + H2O = (1,4-alpha-D-galacturonosyl)n + (1,4-alpha-D-galacturonosyl)m.. May function in the depolymerization of the pectin in its walls during pollen tube elongation, or in that of the pistil during pollination. The chain is Polygalacturonase from Medicago sativa (Alfalfa).